The chain runs to 278 residues: MGTLGRAIYTVGNWIRGTGQALDRVGSLLQGSHRIEEHLSRHRTLMNVFDKSPLVDKDVFVAPSASVIGDVQIGKGSSIWYGCVLRGDVNNISVGSGTNIQDNTLVHVAKTNISGKVLPTLIGDNVTVGHSAVIHGCTVEDDAFVGMGATLLDGVVVEKHAMVAAGSLVKQNTRIPSGEVWGGNPAKFMRKLTDEEIVYISQSAKNYINLAQIHASENSKSFEQIEVERALRKKYARKDEDYDSMLGITRETPPELILPDNVLPGGKPVAKVPSTQYF.

A mitochondrion-targeting transit peptide spans 1–43 (MGTLGRAIYTVGNWIRGTGQALDRVGSLLQGSHRIEEHLSRHR). Residues 86–88 (RGD) and 101–102 (QD) each bind substrate. Positions 107, 130, and 135 each coordinate Zn(2+). Asn-209 serves as a coordination point for substrate.

This sequence belongs to the gamma-class carbonic anhydrase family. In terms of assembly, homotrimer. Component of the mitochondrial oxidoreductase respiratory chain complex I; element of the extra matrix-exposed domain, which is attached to the membrane arm of this complex. Interacts with GAMMACAL1 and GAMMACAL2. Requires Zn(2+) as cofactor. In terms of tissue distribution, constitutively expressed in roots and leaves, with higher levels in flowers, particularly in tapetal tissue of anthers, inflorescence (IM) and floral meristems (FM).

It localises to the mitochondrion membrane. In terms of biological role, enzyme involved in the catabolism of H(2)CO(3) but that does not mediates the reversible hydration of carbon dioxide. Mediates complex I assembly in mitochondria and respiration. Binds HCO(3)-. Required for male fertility during anther development and dehiscence to regulate the secondary thickenings of the endothecial cell wall, probably by modulating H(2)O(2)-dependent lignin polymerization. The sequence is that of Gamma carbonic anhydrase 2, mitochondrial (GAMMACA2) from Arabidopsis thaliana (Mouse-ear cress).